A 668-amino-acid polypeptide reads, in one-letter code: Break repair meiotic recombinase recruitment factor 1 (668 aa).

Disordered stretches follow at residues 1 to 142, 155 to 333, 349 to 465, 482 to 521, and 642 to 668; these read MTKR…AQSP, LQEA…GCSS, LEER…GGQN, VLEH…HSAD, and LGGK…WREL. Residues 114-125 are compositionally biased toward basic and acidic residues; sequence TRKEEMKDEDRG. The segment covering 166–180 has biased composition (polar residues); it reads QADSARPEQSSQSPV. Residues 208–251 show a composition bias toward basic and acidic residues; it reads SQDHLSEQGADDSKPETDRVPGDGGQKEHLPSIDSEGEKPDRGA. Low complexity predominate over residues 279–296; sequence TPASAPTSGPAPGLGPAS. A compositionally biased stretch (polar residues) spans 305–316; the sequence is AQGSPDPQQTPS. Position 370 is a phosphoserine (serine 370). The segment covering 391-400 has biased composition (low complexity); sequence TGETTGESGE.

In terms of assembly, interacts with HSF2BP (via N-terminus) and BRCA2; the interaction with HSF2BP is direct and allows the formation of a ternary complex. The complex BRME1:HSF2BP:BRCA2 interacts with SPATA22, MEIOB and RAD51.

The protein resides in the chromosome. Its function is as follows. Meiotic recombination factor component of recombination bridges involved in meiotic double-strand break repair. Modulates the localization of recombinases DMC1:RAD51 to meiotic double-strand break (DSB) sites through the interaction with and stabilization of the BRCA2:HSF2BP complex during meiotic recombination. Indispensable for the DSB repair, homologous synapsis, and crossover formation that are needed for progression past metaphase I, is essential for spermatogenesis and male fertility. The sequence is that of Break repair meiotic recombinase recruitment factor 1 from Homo sapiens (Human).